Reading from the N-terminus, the 206-residue chain is N-(5'-phosphoribosyl)anthranilate isomerase (206 aa).

Belongs to the TrpF family.

The catalysed reaction is N-(5-phospho-beta-D-ribosyl)anthranilate = 1-(2-carboxyphenylamino)-1-deoxy-D-ribulose 5-phosphate. Its pathway is amino-acid biosynthesis; L-tryptophan biosynthesis; L-tryptophan from chorismate: step 3/5. This chain is N-(5'-phosphoribosyl)anthranilate isomerase, found in Pseudomonas syringae pv. syringae (strain B728a).